We begin with the raw amino-acid sequence, 211 residues long: Secreted phosphoprotein 24 (211 aa).

The signal sequence occupies residues 1–29; the sequence is MISRMEKMTMMMKILIMFALGMNYWSCSG. Intrachain disulfides connect cysteine 92–cysteine 103 and cysteine 116–cysteine 134. Serine 96 is modified (phosphoserine). A phosphoserine mark is found at serine 145, serine 146, serine 170, serine 173, and serine 182.

Belongs to the SPP2 family. In terms of processing, phosphorylation sites are present in the extracellular medium. In terms of tissue distribution, detected in liver and plasma.

Its subcellular location is the secreted. In terms of biological role, could coordinate an aspect of bone turnover. This Homo sapiens (Human) protein is Secreted phosphoprotein 24 (SPP2).